Consider the following 214-residue polypeptide: Pyrrolidone-carboxylate peptidase (214 aa).

Active-site residues include Glu-80, Cys-143, and His-166.

It belongs to the peptidase C15 family. In terms of assembly, homotetramer.

It localises to the cytoplasm. It catalyses the reaction Release of an N-terminal pyroglutamyl group from a polypeptide, the second amino acid generally not being Pro.. In terms of biological role, removes 5-oxoproline from various penultimate amino acid residues except L-proline. The chain is Pyrrolidone-carboxylate peptidase from Enterobacter sp. (strain 638).